The following is a 303-amino-acid chain: UDP-3-O-acyl-N-acetylglucosamine deacetylase (303 aa).

Residues H78, H237, and D241 each coordinate Zn(2+). Catalysis depends on H264, which acts as the Proton donor.

Belongs to the LpxC family. Requires Zn(2+) as cofactor.

The enzyme catalyses a UDP-3-O-[(3R)-3-hydroxyacyl]-N-acetyl-alpha-D-glucosamine + H2O = a UDP-3-O-[(3R)-3-hydroxyacyl]-alpha-D-glucosamine + acetate. It functions in the pathway glycolipid biosynthesis; lipid IV(A) biosynthesis; lipid IV(A) from (3R)-3-hydroxytetradecanoyl-[acyl-carrier-protein] and UDP-N-acetyl-alpha-D-glucosamine: step 2/6. Its function is as follows. Catalyzes the hydrolysis of UDP-3-O-myristoyl-N-acetylglucosamine to form UDP-3-O-myristoylglucosamine and acetate, the committed step in lipid A biosynthesis. This Pseudomonas aeruginosa (strain LESB58) protein is UDP-3-O-acyl-N-acetylglucosamine deacetylase.